A 524-amino-acid chain; its full sequence is GMP synthase [glutamine-hydrolyzing] (524 aa).

One can recognise a Glutamine amidotransferase type-1 domain in the interval 9–207 (RILILDFGSQ…VIHICQCIPN (199 aa)). Cys86 functions as the Nucleophile in the catalytic mechanism. Catalysis depends on residues His181 and Glu183. Residues 208–399 (WTTKHIIEDS…LGLPADLIYR (192 aa)) form the GMPS ATP-PPase domain. 235 to 241 (SGGVDSA) is a binding site for ATP.

In terms of assembly, homodimer.

It catalyses the reaction XMP + L-glutamine + ATP + H2O = GMP + L-glutamate + AMP + diphosphate + 2 H(+). The protein operates within purine metabolism; GMP biosynthesis; GMP from XMP (L-Gln route): step 1/1. In terms of biological role, catalyzes the synthesis of GMP from XMP. This Coxiella burnetii (strain RSA 493 / Nine Mile phase I) protein is GMP synthase [glutamine-hydrolyzing].